The following is an 88-amino-acid chain: Cell division topological specificity factor (88 aa).

This sequence belongs to the MinE family.

Prevents the cell division inhibition by proteins MinC and MinD at internal division sites while permitting inhibition at polar sites. This ensures cell division at the proper site by restricting the formation of a division septum at the midpoint of the long axis of the cell. The polypeptide is Cell division topological specificity factor (Shewanella denitrificans (strain OS217 / ATCC BAA-1090 / DSM 15013)).